Consider the following 220-residue polypeptide: Catechol O-methyltransferase (220 aa).

S-adenosyl-L-methionine is bound by residues Val44, Glu66, 68 to 69 (GT), Ser74, Glu92, and Ala121. Asp139 lines the a divalent metal cation pocket. Asp141 is a binding site for S-adenosyl-L-methionine. A divalent metal cation-binding residues include Asp165 and Asn166.

This sequence belongs to the class I-like SAM-binding methyltransferase superfamily. Cation-dependent O-methyltransferase family. In terms of assembly, homodimer. It depends on a divalent metal cation as a cofactor.

It catalyses the reaction a catechol + S-adenosyl-L-methionine = a guaiacol + S-adenosyl-L-homocysteine + H(+). Its activity is regulated as follows. Inhibited by EDTA. In terms of biological role, catechol O-methyltransferase that can use various catechol-like compounds such as gallic acid (GA), 3,4-dihydroxy-5-methoxy-benzoic acid (5OMeBA), protocatechuic acid (PCA), 3,4-dihydroxy-benzaldehyde (DHA), dopamine, caffeic acid (CA), luteolin, quercetin, and 5-hydroxyuridine. This Mycobacterium tuberculosis (strain ATCC 25618 / H37Rv) protein is Catechol O-methyltransferase.